The following is a 398-amino-acid chain: Bifunctional enzyme IspD/IspF (398 aa).

The 2-C-methyl-D-erythritol 4-phosphate cytidylyltransferase stretch occupies residues 1 to 234; sequence MANSRRTAAI…SRLAALLGDI (234 aa). The 2-C-methyl-D-erythritol 2,4-cyclodiphosphate synthase stretch occupies residues 235–398; it reads RTGTGYDVHA…LPWGPNGLSG (164 aa). A divalent metal cation-binding residues include Asp-241 and His-243. 4-CDP-2-C-methyl-D-erythritol 2-phosphate contacts are provided by residues 241-243 and 267-268; these read DVH and HS. Position 275 (His-275) interacts with a divalent metal cation. Residues 289 to 291, 365 to 368, Phe-372, and Arg-375 each bind 4-CDP-2-C-methyl-D-erythritol 2-phosphate; these read DIG and TTSE.

The protein in the N-terminal section; belongs to the IspD/TarI cytidylyltransferase family. IspD subfamily. This sequence in the C-terminal section; belongs to the IspF family. A divalent metal cation is required as a cofactor.

The enzyme catalyses 2-C-methyl-D-erythritol 4-phosphate + CTP + H(+) = 4-CDP-2-C-methyl-D-erythritol + diphosphate. It catalyses the reaction 4-CDP-2-C-methyl-D-erythritol 2-phosphate = 2-C-methyl-D-erythritol 2,4-cyclic diphosphate + CMP. The protein operates within isoprenoid biosynthesis; isopentenyl diphosphate biosynthesis via DXP pathway; isopentenyl diphosphate from 1-deoxy-D-xylulose 5-phosphate: step 2/6. Its pathway is isoprenoid biosynthesis; isopentenyl diphosphate biosynthesis via DXP pathway; isopentenyl diphosphate from 1-deoxy-D-xylulose 5-phosphate: step 4/6. Its function is as follows. Bifunctional enzyme that catalyzes the formation of 4-diphosphocytidyl-2-C-methyl-D-erythritol from CTP and 2-C-methyl-D-erythritol 4-phosphate (MEP) (IspD), and catalyzes the conversion of 4-diphosphocytidyl-2-C-methyl-D-erythritol 2-phosphate (CDP-ME2P) to 2-C-methyl-D-erythritol 2,4-cyclodiphosphate (ME-CPP) with a corresponding release of cytidine 5-monophosphate (CMP) (IspF). The chain is Bifunctional enzyme IspD/IspF from Rhodopseudomonas palustris (strain BisA53).